We begin with the raw amino-acid sequence, 608 residues long: UvrABC system protein C (608 aa).

The region spanning 16 to 94 (NRPGVYRMFD…IKEWRPPYNI (79 aa)) is the GIY-YIG domain. Residues 204 to 239 (NALADELNVGMEQAAMRLDFEKAAELRDQVAILRRV) enclose the UVR domain.

The protein belongs to the UvrC family. Interacts with UvrB in an incision complex.

The protein localises to the cytoplasm. Its function is as follows. The UvrABC repair system catalyzes the recognition and processing of DNA lesions. UvrC both incises the 5' and 3' sides of the lesion. The N-terminal half is responsible for the 3' incision and the C-terminal half is responsible for the 5' incision. This chain is UvrABC system protein C, found in Pseudomonas aeruginosa (strain LESB58).